The following is a 156-amino-acid chain: MARERIPITREGLEALRQEYEYLVKHRRPEIARVIQEAREHGDIRENAAYDAAKHDQAFIEGRIREIEELLKRVELIEQPTDGDRSVVRVGSTVTIEIDGEIETYTIVGAIEAKPSAGRISNESPVGRALLGHRAGEIVPIETPNGTLMARIIEVQ.

Belongs to the GreA/GreB family.

In terms of biological role, necessary for efficient RNA polymerase transcription elongation past template-encoded arresting sites. The arresting sites in DNA have the property of trapping a certain fraction of elongating RNA polymerases that pass through, resulting in locked ternary complexes. Cleavage of the nascent transcript by cleavage factors such as GreA or GreB allows the resumption of elongation from the new 3'terminus. GreA releases sequences of 2 to 3 nucleotides. The chain is Transcription elongation factor GreA from Thermomicrobium roseum (strain ATCC 27502 / DSM 5159 / P-2).